We begin with the raw amino-acid sequence, 459 residues long: DIMBOA UDP-glucosyltransferase BX8 (459 aa).

The Proton acceptor role is filled by His-19. His-19 serves as a coordination point for an anthocyanidin. Residue Asp-119 is the Charge relay of the active site. The UDP-alpha-D-glucose site is built by Thr-141, Ala-340, Gln-342, His-357, Trp-360, Asn-361, Ser-362, and Glu-365. Gly-380 is a binding site for an anthocyanidin. Asp-381 and Gln-382 together coordinate UDP-alpha-D-glucose.

This sequence belongs to the UDP-glycosyltransferase family. The cofactor is Mg(2+). Ca(2+) serves as cofactor. As to expression, expressed at the same levels in roots and shoots.

The enzyme catalyses DIMBOA + UDP-alpha-D-glucose = DIMBOA beta-D-glucoside + UDP + H(+). The catalysed reaction is DIBOA + UDP-alpha-D-glucose = DIBOA beta-D-glucoside + UDP + H(+). Glucosyltransferase involved in the last step of benzoxazinoid glucoside biosynthesis. Catalyzes the glucosylation of hydroxamic acids utilizing UDP-glucose as glucose doner, reducing the toxicity of these natural insecticides for storage. Can use DIMBOA and DIBOA as substrates, HMBOA (2-hydroxy-7-methoxy-2H-1,4-benzoxazin-3(4H)-one) and HBOA (2-hydroxy-2H-1,4-benzoxazin-3(4H)-one) with a lower efficiency, but not indole acetic acid or quercitin. In Zea mays (Maize), this protein is DIMBOA UDP-glucosyltransferase BX8 (Bx8).